The sequence spans 284 residues: Ubiquinone biosynthesis protein COQ4, mitochondrial (284 aa).

Zn(2+)-binding residues include histidine 165, aspartate 166, histidine 169, and glutamate 181.

It belongs to the COQ4 family. In terms of assembly, component of a multi-subunit COQ enzyme complex, composed of at least COQ3, COQ4, COQ5, COQ6, COQ7 and COQ9. Zn(2+) serves as cofactor.

The protein localises to the mitochondrion inner membrane. The catalysed reaction is a 4-hydroxy-3-methoxy-5-(all-trans-polyprenyl)benzoate + H(+) = a 2-methoxy-6-(all-trans-polyprenyl)phenol + CO2. Its pathway is cofactor biosynthesis; ubiquinone biosynthesis. Lyase that catalyzes the C1-decarboxylation of 4-hydroxy-3-methoxy-5-(all-trans-polyprenyl)benzoic acid into 2-methoxy-6-(all-trans-polyprenyl)phenol during ubiquinone biosynthesis. This chain is Ubiquinone biosynthesis protein COQ4, mitochondrial, found in Blastomyces gilchristii (strain SLH14081) (Blastomyces dermatitidis).